The following is a 334-amino-acid chain: Fructose-1,6-bisphosphatase class 1 (334 aa).

Mg(2+) is bound by residues glutamate 90, aspartate 113, leucine 115, and aspartate 116. Substrate is bound by residues 116-119 (DGSS), asparagine 209, tyrosine 242, and lysine 272. Glutamate 278 contributes to the Mg(2+) binding site.

Belongs to the FBPase class 1 family. In terms of assembly, homotetramer. The cofactor is Mg(2+).

It is found in the cytoplasm. The catalysed reaction is beta-D-fructose 1,6-bisphosphate + H2O = beta-D-fructose 6-phosphate + phosphate. It functions in the pathway carbohydrate biosynthesis; gluconeogenesis. This is Fructose-1,6-bisphosphatase class 1 from Actinobacillus succinogenes (strain ATCC 55618 / DSM 22257 / CCUG 43843 / 130Z).